A 160-amino-acid chain; its full sequence is Large ribosomal subunit protein uL16 (160 aa).

The interval 138–160 (KNLENSSQENTKDSKKSQEEVKQ) is disordered. The span at 147–160 (NTKDSKKSQEEVKQ) shows a compositional bias: basic and acidic residues.

The protein belongs to the universal ribosomal protein uL16 family. Part of the 50S ribosomal subunit.

Binds 23S rRNA and is also seen to make contacts with the A and possibly P site tRNAs. This is Large ribosomal subunit protein uL16 from Prochlorococcus marinus (strain AS9601).